We begin with the raw amino-acid sequence, 313 residues long: Porphobilinogen deaminase (313 aa).

C241 carries the post-translational modification S-(dipyrrolylmethanemethyl)cysteine.

It belongs to the HMBS family. Monomer. Dipyrromethane is required as a cofactor.

The enzyme catalyses 4 porphobilinogen + H2O = hydroxymethylbilane + 4 NH4(+). It participates in porphyrin-containing compound metabolism; protoporphyrin-IX biosynthesis; coproporphyrinogen-III from 5-aminolevulinate: step 2/4. It functions in the pathway porphyrin-containing compound metabolism; chlorophyll biosynthesis. Tetrapolymerization of the monopyrrole PBG into the hydroxymethylbilane pre-uroporphyrinogen in several discrete steps. In Chlorobium luteolum (strain DSM 273 / BCRC 81028 / 2530) (Pelodictyon luteolum), this protein is Porphobilinogen deaminase.